The sequence spans 528 residues: Aspartic proteinase-like protein 1 (528 aa).

A signal peptide spans 1 to 22 (MVSRSAFLLFCVLFLATEETLA). One can recognise a Peptidase A1 domain in the interval 100–449 (HYTWIDIGTP…DRENMKLGWS (350 aa)). Residue aspartate 118 is part of the active site. N-linked (GlcNAc...) asparagine glycans are attached at residues asparagine 193 and asparagine 217. Aspartate 333 is a catalytic residue. Asparagine 358 and asparagine 391 each carry an N-linked (GlcNAc...) asparagine glycan. Residues 451–503 (SKCQEDKIEPPQASPGSTSSPNPLPTDEQQSRGGHAVSPAIAGKTPSKTPSSS) form a disordered region. Polar residues predominate over residues 464–482 (SPGSTSSPNPLPTDEQQSR). Residues 494 to 503 (KTPSKTPSSS) are compositionally biased toward low complexity. Residue serine 503 is the site of GPI-anchor amidated serine attachment. Positions 504-528 (SSYSFSSIMRLFNSLLLLHWLASLM) are cleaved as a propeptide — removed in mature form.

It belongs to the peptidase A1 family.

It is found in the cell membrane. This is Aspartic proteinase-like protein 1 from Arabidopsis thaliana (Mouse-ear cress).